The following is a 148-amino-acid chain: Large ribosomal subunit protein uL15 (148 aa).

The interval 1 to 57 (MRLNDVKPQKGSKKRRRRVGRGISAGQGASAGLGMRGQKSRSGSGTRPGFEGGQQPL) is disordered. A compositionally biased stretch (basic residues) spans 10–20 (KGSKKRRRRVG). Over residues 23 to 35 (ISAGQGASAGLGM) the composition is skewed to gly residues.

This sequence belongs to the universal ribosomal protein uL15 family. As to quaternary structure, part of the 50S ribosomal subunit.

In terms of biological role, binds to the 23S rRNA. In Nostoc sp. (strain PCC 7120 / SAG 25.82 / UTEX 2576), this protein is Large ribosomal subunit protein uL15.